The primary structure comprises 364 residues: Deoxyribonuclease-2-alpha (364 aa).

Residues 1-21 form the signal peptide; the sequence is MATLSPLLLAALLWVPVGTLT. A disulfide bond links Cys22 and Cys161. N-linked (GlcNAc...) asparagine glycans are attached at residues Asn72, Asn88, Asn171, Asn214, Asn268, and Asn292. 2 cysteine pairs are disulfide-bonded: Cys269/Cys349 and Cys310/Cys329. The active site involves His297.

It belongs to the DNase II family.

The protein localises to the lysosome. The catalysed reaction is Endonucleolytic cleavage to nucleoside 3'-phosphates and 3'-phosphooligonucleotide end-products.. In terms of biological role, hydrolyzes DNA under acidic conditions with a preference for double-stranded DNA. Plays a major role in the clearance of nucleic acids generated through apoptosis, hence preventing autoinflammation. Necessary for proper fetal development and for definitive erythropoiesis in fetal liver and bone marrow, where it degrades nuclear DNA expelled from erythroid precursor cells. The polypeptide is Deoxyribonuclease-2-alpha (DNASE2) (Sus scrofa (Pig)).